A 955-amino-acid chain; its full sequence is Anoctamin-4 (955 aa).

At 1–352 (MEASSSGITN…FGEKIGLYFA (352 aa)) the chain is on the extracellular side. Residues 72–100 (CKDDDSLLHPGNLTSTSDDASRLEAGGET) are disordered. Asparagine 83, asparagine 105, asparagine 257, and asparagine 288 each carry an N-linked (GlcNAc...) asparagine glycan. The helical transmembrane segment at 353 to 373 (WLGWYTGMLFPAAFIGLFVFL) threads the bilayer. Topologically, residues 374–424 (YGVTTLDHSQVSKEVCQATDIIMCPVCDKYCPFMRLSDSCVYAKVTHLFDN) are cytoplasmic. A helical membrane pass occupies residues 425–445 (GATVFFAVFMAVWATVFLEFW). Residues 446–505 (KRRRAVIAYDWDLIDWEEEEEEIRPQFEAKYSKKERMNPISGKPEPYQAFTDKCSRLIVS) lie on the Extracellular side of the membrane. The chain crosses the membrane as a helical span at residues 506–526 (ASGIFFMICVVIAAVFGIVIY). Residues 527–547 (RVVTVSTFAAFKWALIRNNSQ) lie on the Cytoplasmic side of the membrane. The chain crosses the membrane as a helical span at residues 548 to 568 (VATTGTAVCINFCIIMLLNVL). Residues 569–595 (YEKVALLLTNLEQPRTESEWENSFTLK) are Extracellular-facing. The helical transmembrane segment at 596–616 (MFLFQFVNLNSSTFYIAFFLG) threads the bilayer. The Cytoplasmic portion of the chain corresponds to 617-715 (RFTGHPGAYL…AYGLFDEYLE (99 aa)). A helical membrane pass occupies residues 716 to 736 (MILQFGFTTIFVAAFPLAPLL). Over 737–768 (ALLNNIIEIRLDAYKFVTQWRRPLASRAKDIG) the chain is Extracellular. Residues 769–789 (IWYGILEGIGILSVITNAFVI) traverse the membrane as a helical segment. Topologically, residues 790–885 (AITSDFIPRL…QFWHVLAARL (96 aa)) are cytoplasmic. A helical membrane pass occupies residues 886-906 (AFIIVFEHLVFCIKHLISYLI). Topologically, residues 907–955 (PDLPKDLRDRMRREKYLIQEMMYEAELERLQKERKERKKNGKAHHNEWP) are extracellular.

This sequence belongs to the anoctamin family.

The protein localises to the cell membrane. It carries out the reaction a 1,2-diacyl-sn-glycero-3-phospho-L-serine(in) = a 1,2-diacyl-sn-glycero-3-phospho-L-serine(out). The catalysed reaction is a beta-D-galactosyl-(1&lt;-&gt;1')-N-acylsphing-4-enine(out) = a beta-D-galactosyl-(1&lt;-&gt;1')-N-acylsphing-4-enine(in). The enzyme catalyses a 1,2-diacyl-sn-glycero-3-phosphocholine(in) = a 1,2-diacyl-sn-glycero-3-phosphocholine(out). Has calcium-dependent phospholipid scramblase activity; scrambles phosphatidylserine, phosphatidylcholine and galactosylceramide. Does not exhibit calcium-activated chloride channel (CaCC) activity. The sequence is that of Anoctamin-4 (ANO4) from Homo sapiens (Human).